Consider the following 72-residue polypeptide: Large ribosomal subunit protein bL31 (72 aa).

Zn(2+) is bound by residues cysteine 16, cysteine 18, cysteine 38, and cysteine 41.

It belongs to the bacterial ribosomal protein bL31 family. Type A subfamily. In terms of assembly, part of the 50S ribosomal subunit. Requires Zn(2+) as cofactor.

Its function is as follows. Binds the 23S rRNA. The protein is Large ribosomal subunit protein bL31 of Vibrio cholerae serotype O1 (strain ATCC 39541 / Classical Ogawa 395 / O395).